The sequence spans 361 residues: Chorismate synthase (361 aa).

NADP(+) contacts are provided by arginine 48 and arginine 54. Residues arginine 125–serine 127, asparagine 238–alanine 239, glycine 278, lysine 293–serine 297, and arginine 319 each bind FMN.

Belongs to the chorismate synthase family. As to quaternary structure, homotetramer. The cofactor is FMNH2.

The enzyme catalyses 5-O-(1-carboxyvinyl)-3-phosphoshikimate = chorismate + phosphate. Its pathway is metabolic intermediate biosynthesis; chorismate biosynthesis; chorismate from D-erythrose 4-phosphate and phosphoenolpyruvate: step 7/7. In terms of biological role, catalyzes the anti-1,4-elimination of the C-3 phosphate and the C-6 proR hydrogen from 5-enolpyruvylshikimate-3-phosphate (EPSP) to yield chorismate, which is the branch point compound that serves as the starting substrate for the three terminal pathways of aromatic amino acid biosynthesis. This reaction introduces a second double bond into the aromatic ring system. The chain is Chorismate synthase from Yersinia pseudotuberculosis serotype O:1b (strain IP 31758).